Reading from the N-terminus, the 504-residue chain is Cytochrome P450 3A41 (504 aa).

Heme is bound at residue cysteine 443.

Belongs to the cytochrome P450 family. Heme serves as cofactor. Expressed in liver. Also expressed in the kidneys of female mice, with traces in the stomach, ovary, and heart of female mice and in the testis of male mice.

It is found in the endoplasmic reticulum membrane. Its subcellular location is the microsome membrane. The enzyme catalyses an organic molecule + reduced [NADPH--hemoprotein reductase] + O2 = an alcohol + oxidized [NADPH--hemoprotein reductase] + H2O + H(+). This chain is Cytochrome P450 3A41 (Cyp3a41a), found in Mus musculus (Mouse).